A 247-amino-acid chain; its full sequence is Carboxy-S-adenosyl-L-methionine synthase (247 aa).

Residues Y40, 65 to 67 (GAS), 90 to 91 (DN), 122 to 123 (DI), N137, and R204 each bind S-adenosyl-L-methionine.

Belongs to the class I-like SAM-binding methyltransferase superfamily. Cx-SAM synthase family. As to quaternary structure, homodimer.

It carries out the reaction prephenate + S-adenosyl-L-methionine = carboxy-S-adenosyl-L-methionine + 3-phenylpyruvate + H2O. Functionally, catalyzes the conversion of S-adenosyl-L-methionine (SAM) to carboxy-S-adenosyl-L-methionine (Cx-SAM). The sequence is that of Carboxy-S-adenosyl-L-methionine synthase from Pseudomonas fluorescens (strain Pf0-1).